The primary structure comprises 434 residues: MGIKNLKSLLLENKSLTILDDNLYKVYNGIFVDTMSIYIAVANCVRNLEELTTVFIKYVNGWVKKGGHVTLFIDRGSIKIKQNVRDKRRKYSKSTKDRKMLELEKCTSKIQNVTGFMEEEIKAEIQLKIDKLTFQIYLSDSDNIKISLNEILTHFNNNENVTLFYCDERDAEFVMCLEAKTYFFTTGEWPLIISTDQDTMLFASVDNHPKMIKNLTQLFKFVPSAEDNYLAKLTALVNGCDFFPGLYGASITPTNLNKIQLFSDFTINNIVTSLAIKNYYRKTNSTVDVRNIVTFINDYANLDDVYSYIPPCQCTVQEFIFSALDEKWNDFKSSYLETVPLPCQLMYALEPRKEIDVSEVKTLSSYIDFENTKSDIDVIKSISSIFGYSNENCNTIVFGIYKDNLLLSINSSFYFNNSLLITNTKSDNIINIGY.

Residues aspartate 33, aspartate 74, glutamate 168, aspartate 170, aspartate 196, and aspartate 198 each coordinate Mg(2+).

Belongs to the XPG/RAD2 endonuclease family. FEN1 subfamily. Mg(2+) serves as cofactor.

The protein localises to the virion. Its function is as follows. Putative nuclease that seems to be required for double-strand break repair, homologous recombination, and production of full-length viral genomic DNA. This Homo sapiens (Human) protein is Putative nuclease OPG089 (OPG089).